A 348-amino-acid polypeptide reads, in one-letter code: Phosphoribosylformylglycinamidine cyclo-ligase (348 aa).

This sequence belongs to the AIR synthase family.

Its subcellular location is the cytoplasm. The catalysed reaction is 2-formamido-N(1)-(5-O-phospho-beta-D-ribosyl)acetamidine + ATP = 5-amino-1-(5-phospho-beta-D-ribosyl)imidazole + ADP + phosphate + H(+). Its pathway is purine metabolism; IMP biosynthesis via de novo pathway; 5-amino-1-(5-phospho-D-ribosyl)imidazole from N(2)-formyl-N(1)-(5-phospho-D-ribosyl)glycinamide: step 2/2. In Aromatoleum aromaticum (strain DSM 19018 / LMG 30748 / EbN1) (Azoarcus sp. (strain EbN1)), this protein is Phosphoribosylformylglycinamidine cyclo-ligase.